A 130-amino-acid chain; its full sequence is Albumin-1 E (130 aa).

The first 26 residues, 1–26 (MASVKLASLIVLFATLGMFLTKNVGA), serve as a signal peptide directing secretion. 3 cysteine pairs are disulfide-bonded: C29/C46, C33/C48, and C41/C58. Propeptides lie at residues 64-69 (VFLKGN) and 123-130 (LLKSVSTA).

The C-terminal glycine may be removed from PA1b.

Its function is as follows. PA1b binds to basic 7S globulin (BG) and stimulates its phosphorylation activity. Involved in the signal transduction system to regulate the growth and differentiation as a hormone peptide. Toxic to various insects through binding to a high affinity binding site in the insect gut. The polypeptide is Albumin-1 E (Pisum sativum (Garden pea)).